The sequence spans 1111 residues: Protein NETWORKED 1C (1111 aa).

Positions 13–93 constitute an NAB domain; that stretch reads YSWWWDSHNT…ERYNHATGVI (81 aa). Coiled-coil stretches lie at residues 202-287, 314-605, and 642-752; these read SESE…KESS, ERAS…LISE, and KTIG…LESK. The interval 850-870 is disordered; that stretch reads TGGGRSMRKQDGGSGRMRKQS. The stretch at 943–1009 forms a coiled coil; it reads NREVNKRRVL…EGEEAIEKLF (67 aa).

Belongs to the NET family.

In terms of biological role, plant-specific actin binding protein. May be part of a membrane-cytoskeletal adapter complex. The sequence is that of Protein NETWORKED 1C from Arabidopsis thaliana (Mouse-ear cress).